Here is a 308-residue protein sequence, read N- to C-terminus: Maspardin (308 aa).

The 73-residue stretch at 87-159 (FCDGFRKLLD…NSFWLMPAFM (73 aa)) folds into the AB hydrolase-1 domain. At S304 the chain carries Phosphoserine.

The protein belongs to the AB hydrolase superfamily. As to quaternary structure, interacts with CD4. Interacts with ALDH16A1. Expressed in cell lines FT.1 and in a L cell fibroblast derivative (at protein level).

Its subcellular location is the cytoplasm. May play a role as a negative regulatory factor in CD4-dependent T-cell activation. The chain is Maspardin (Spg21) from Mus musculus (Mouse).